The following is a 377-amino-acid chain: RCC1 domain-containing protein 1 (377 aa).

The tract at residues 1–172 (MAEKRHGAWF…VRQLELGAEH (172 aa)) is interaction with KDM8. The RCC1 1 repeat unit spans residues 6 to 57 (HGAWFGFGFCGFGQALGSGNSHHSVYSPEPLHASDDICQVSAGWSYTALVTR). Position 144 is a (3R)-3-hydroxyarginine (Arg144). RCC1 repeat units lie at residues 179-230 (AGQV…CLSE), 232-289 (GDIY…IAIQ), and 319-372 (TGEL…VYAM).

Found in a complex with KDM8. Interacts (via N-terminus) with KDM8 (via N-terminus). Specifically hydroxylated (with R stereochemistry) at C-3 of ARG-141 by KDM8.

The protein resides in the chromosome. In terms of biological role, plays a role in transcriptional repression of satellite repeats, possibly by regulating H3K36 methylation levels in centromeric regions together with KDM8. Possibly together with KDM8, is involved in proper mitotic spindle organization and chromosome segregation. Plays a role in regulating alpha-tubulin deacetylation and cytoskeletal microtubule stability, thereby promoting cell migration and TGF-beta-induced epithelial to mesenchymal transition (EMT), potentially through the inhibition of KDM8. This is RCC1 domain-containing protein 1 (Rccd1) from Mus musculus (Mouse).